The following is a 376-amino-acid chain: Proton extrusion protein PxcA (376 aa).

The next 4 helical transmembrane spans lie at 150 to 170 (TLIS…VQQM), 251 to 271 (AVKN…VCII), 299 to 319 (IILF…QVLL), and 334 to 354 (FILL…KYWI).

It belongs to the CemA family.

It localises to the cell inner membrane. Functionally, required for H(+) efflux immediately after light irradiation to form a rapid H(+) concentration gradient across the thylakoid membranes. Together with PxcL, contributes to transient H(+) uptake following dark to light transition. This Prochlorococcus marinus (strain MIT 9303) protein is Proton extrusion protein PxcA.